The sequence spans 51 residues: Large ribosomal subunit protein eL39 (51 aa).

This sequence belongs to the eukaryotic ribosomal protein eL39 family.

The chain is Large ribosomal subunit protein eL39 (rpl39e) from Pyrococcus abyssi (strain GE5 / Orsay).